The sequence spans 469 residues: Trigger factor (469 aa).

The PPIase FKBP-type domain occupies G162–P243. The tract at residues N429–E469 is disordered. Positions F437–E452 are enriched in basic and acidic residues. The segment covering A453–E469 has biased composition (acidic residues).

The protein belongs to the FKBP-type PPIase family. Tig subfamily.

It is found in the cytoplasm. It carries out the reaction [protein]-peptidylproline (omega=180) = [protein]-peptidylproline (omega=0). In terms of biological role, involved in protein export. Acts as a chaperone by maintaining the newly synthesized protein in an open conformation. Functions as a peptidyl-prolyl cis-trans isomerase. In Mycobacterium leprae (strain Br4923), this protein is Trigger factor.